Consider the following 435-residue polypeptide: 4-hydroxy-3-methylbut-2-en-1-yl diphosphate synthase (flavodoxin) (435 aa).

The segment covering 1–15 (MTDVDLRARPQEGMK) has biased composition (basic and acidic residues). A disordered region spans residues 1–24 (MTDVDLRARPQEGMKEIPAGPKGR). Positions 316, 319, 362, and 369 each coordinate [4Fe-4S] cluster.

It belongs to the IspG family. The cofactor is [4Fe-4S] cluster.

It carries out the reaction (2E)-4-hydroxy-3-methylbut-2-enyl diphosphate + oxidized [flavodoxin] + H2O + 2 H(+) = 2-C-methyl-D-erythritol 2,4-cyclic diphosphate + reduced [flavodoxin]. It functions in the pathway isoprenoid biosynthesis; isopentenyl diphosphate biosynthesis via DXP pathway; isopentenyl diphosphate from 1-deoxy-D-xylulose 5-phosphate: step 5/6. Functionally, converts 2C-methyl-D-erythritol 2,4-cyclodiphosphate (ME-2,4cPP) into 1-hydroxy-2-methyl-2-(E)-butenyl 4-diphosphate. This is 4-hydroxy-3-methylbut-2-en-1-yl diphosphate synthase (flavodoxin) from Afipia carboxidovorans (strain ATCC 49405 / DSM 1227 / KCTC 32145 / OM5) (Oligotropha carboxidovorans).